The sequence spans 336 residues: Fructose-1,6-bisphosphatase class 1 (336 aa).

4 residues coordinate Mg(2+): glutamate 90, aspartate 112, leucine 114, and aspartate 115. Residues 115–118, asparagine 211, and lysine 277 contribute to the substrate site; that span reads DGSS. Glutamate 283 contributes to the Mg(2+) binding site.

It belongs to the FBPase class 1 family. In terms of assembly, homotetramer. Mg(2+) is required as a cofactor.

The protein resides in the cytoplasm. The catalysed reaction is beta-D-fructose 1,6-bisphosphate + H2O = beta-D-fructose 6-phosphate + phosphate. Its pathway is carbohydrate biosynthesis; gluconeogenesis. The protein is Fructose-1,6-bisphosphatase class 1 of Pseudomonas aeruginosa (strain UCBPP-PA14).